Consider the following 295-residue polypeptide: Indole-3-glycerol phosphate synthase (295 aa).

It belongs to the TrpC family.

The catalysed reaction is 1-(2-carboxyphenylamino)-1-deoxy-D-ribulose 5-phosphate + H(+) = (1S,2R)-1-C-(indol-3-yl)glycerol 3-phosphate + CO2 + H2O. It participates in amino-acid biosynthesis; L-tryptophan biosynthesis; L-tryptophan from chorismate: step 4/5. The chain is Indole-3-glycerol phosphate synthase from Prochlorococcus marinus (strain MIT 9515).